Here is a 222-residue protein sequence, read N- to C-terminus: uncharacterized protein (222 aa).

Helical transmembrane passes span 23-43, 67-87, 157-177, and 187-207; these read FFAAAMLPATLVIIFVETGLL, IWVLSPSVAVVAVLGDQIGYL, IVGGILWGGGVTVAGYFLGNV, and IILGILFVSLLPALIAAWHGY.

The protein belongs to the DedA family.

Its subcellular location is the cell membrane. This is an uncharacterized protein from Mycobacterium leprae (strain TN).